Here is a 576-residue protein sequence, read N- to C-terminus: Arginine--tRNA ligase (576 aa).

The short motif at 126–136 (ANPTGPMHIGH) is the 'HIGH' region element.

It belongs to the class-I aminoacyl-tRNA synthetase family. As to quaternary structure, monomer.

Its subcellular location is the cytoplasm. It catalyses the reaction tRNA(Arg) + L-arginine + ATP = L-arginyl-tRNA(Arg) + AMP + diphosphate. The chain is Arginine--tRNA ligase (argS) from Rickettsia prowazekii (strain Madrid E).